We begin with the raw amino-acid sequence, 865 residues long: Anaphase-promoting complex subunit 6 (865 aa).

3 TPR repeats span residues 11–42 (IEKQ…LNLV), 46–75 (SKEY…LIQK), and 88–149 (EDYQ…LQIL). Positions 153–293 (NDSSENMDDE…NNNNNNNNNF (141 aa)) are disordered. A compositionally biased stretch (acidic residues) spans 183–202 (NCDDDDDDDDDDDDDDDDEK). Residues 249–292 (NKNNNKNNNNNNNNNNNNNNNNNNNNNNNNNNNNNNNNNNNNNN) show a composition bias toward low complexity. TPR repeat units lie at residues 300 to 331 (IRSS…ALLT), 336 to 359 (FEAF…LLEK), 366 to 438 (DSWI…DIST), 478 to 506 (DIQT…ILKQ), 515 to 542 (CLMV…LVDS), 573 to 602 (AISW…STTL), 607 to 635 (GASW…TSSR), 642 to 670 (LPLL…AKDI), and 675 to 709 (PMIF…KIKS). The span at 403 to 434 (SNNNTFGANNNNNNNNNNNNNNNNNNNNNSNN) shows a compositional bias: low complexity. The interval 403 to 436 (SNNNTFGANNNNNNNNNNNNNNNNNNNNNSNNDI) is disordered. The segment at 738–767 (GIGNNNNNNNNRRTTTTTTTTSNNQKKNSS) is disordered. TPR repeat units follow at residues 777–809 (ESWE…SLSL) and 814–843 (PSTY…SLSI).

This sequence belongs to the APC6/CDC16 family. The APC/C is composed of at least 13 subunits that stay tightly associated throughout the cell cycle: anapc1, anapc2, anapc3, anapc4, anapc5, anapc6, anapc7, anapc8, anapc10, anapc11, cdc20, cdc26 and cdh1.

It localises to the nucleus. Its pathway is protein modification; protein ubiquitination. Its function is as follows. Component of the anaphase promoting complex/cyclosome (APC/C), a cell cycle-regulated E3 ubiquitin-protein ligase complex that controls progression through mitosis and the G1 phase of the cell cycle. This is Anaphase-promoting complex subunit 6 (anapc6) from Dictyostelium discoideum (Social amoeba).